Reading from the N-terminus, the 336-residue chain is Serpentine receptor class alpha-10 (336 aa).

At Met1 to Asn28 the chain is on the extracellular side. Residues Val29 to Ile49 form a helical membrane-spanning segment. At Leu50–Lys61 the chain is on the cytoplasmic side. The helical transmembrane segment at Ile62–Gln82 threads the bilayer. Topologically, residues Asn83 to Arg107 are extracellular. A helical membrane pass occupies residues Phe108–Thr128. At Val129–Pro148 the chain is on the cytoplasmic side. Residues Gly149–Ile169 form a helical membrane-spanning segment. The Extracellular segment spans residues Gly170–Asn192. The helical transmembrane segment at Ile193 to Ile213 threads the bilayer. Topologically, residues Tyr214–Arg243 are cytoplasmic. Residues Ile244–Leu264 form a helical membrane-spanning segment. Residues Thr265–Asn280 are Extracellular-facing. The helical transmembrane segment at Met281–Tyr301 threads the bilayer. Residues Arg302–Ala336 lie on the Cytoplasmic side of the membrane.

Belongs to the nematode receptor-like protein sra family. In terms of tissue distribution, expressed in the URX sensory neuron, the ALA interneuron and in additional interneurons, pharyngeal neurons and muscle.

Its subcellular location is the membrane. The chain is Serpentine receptor class alpha-10 (sra-10) from Caenorhabditis elegans.